We begin with the raw amino-acid sequence, 255 residues long: tRNA (guanine-N(1)-)-methyltransferase (255 aa).

Residues Gly121 and 141–146 (IGDYVL) contribute to the S-adenosyl-L-methionine site. The disordered stretch occupies residues 236–255 (PVKAPNRAGRQKTPKNKTDG). Residues 244-255 (GRQKTPKNKTDG) are compositionally biased toward basic residues.

This sequence belongs to the RNA methyltransferase TrmD family. Homodimer.

Its subcellular location is the cytoplasm. The catalysed reaction is guanosine(37) in tRNA + S-adenosyl-L-methionine = N(1)-methylguanosine(37) in tRNA + S-adenosyl-L-homocysteine + H(+). Specifically methylates guanosine-37 in various tRNAs. The sequence is that of tRNA (guanine-N(1)-)-methyltransferase from Bradyrhizobium diazoefficiens (strain JCM 10833 / BCRC 13528 / IAM 13628 / NBRC 14792 / USDA 110).